Here is a 171-residue protein sequence, read N- to C-terminus: MQCPHCHHNGSRVVDSRPTDDGRVIRRRRECENCGFRFTTFERVEATPLLVIKKNGAREEFNREKVLRGIIRSAEKRPVSMETMTGVVDDVENKVRSLGENEISSQVIGEYVMEQLADIDEISYIRFASVYRQFKDMHVFLNELQDMMERDKVKLAKPSAKTTHAPKRKKD.

Over residues methionine 1–glycine 10 the composition is skewed to basic residues. The disordered stretch occupies residues methionine 1 to aspartate 21. Residues cysteine 3 to cysteine 34 fold into a zinc finger. The region spanning leucine 49–valine 139 is the ATP-cone domain. A disordered region spans residues lysine 152–aspartate 171.

The protein belongs to the NrdR family. Requires Zn(2+) as cofactor.

In terms of biological role, negatively regulates transcription of bacterial ribonucleotide reductase nrd genes and operons by binding to NrdR-boxes. The sequence is that of Transcriptional repressor NrdR from Lactiplantibacillus plantarum (strain ATCC BAA-793 / NCIMB 8826 / WCFS1) (Lactobacillus plantarum).